The primary structure comprises 512 residues: Ribonuclease Y (512 aa).

Residues 3 to 23 (FQIILVVIISALVGLVIGFFI) form a helical membrane-spanning segment. The 64-residue stretch at 202 to 265 (TVAVIPLPND…EVARLALERL (64 aa)) folds into the KH domain. The 94-residue stretch at 328-421 (VLKHSIEVCH…VQAADAISAA (94 aa)) folds into the HD domain.

It belongs to the RNase Y family.

The protein resides in the cell membrane. Its function is as follows. Endoribonuclease that initiates mRNA decay. The chain is Ribonuclease Y from Desulforamulus reducens (strain ATCC BAA-1160 / DSM 100696 / MI-1) (Desulfotomaculum reducens).